The primary structure comprises 415 residues: MTELIKKGSAAKEAAQFLAQASTKQKNAALLNLSNDLLTHTASLLEENNKDIIRAREKGTPETMIDRLRLTEERIKEISEAVKQVVALKDPIGEVTNMWKNEAELTIGKTRVPLGVIGIIYESRPNVTVDASVLCFKTGNAVILRGGSDAIDSNKALMSVIQDSLEASGFPRSSVQLIEDTSRETARDMMRLNRFLDVLIPRGGAKLIQTVLENATVPVIETGTGNCHIYVDKAAEKQMAIDILVNAKCSRPSVCNAAETLLIHRDVADAFLPEIETALKEYNVELRADERAREILKDSKAATESDWEDEFLDFILAIKVVDSVDEAINHINKYGTKHSEAIISNDYATGQAFHQKVDAAAVYINASTRFTDGFAMGFGAEIGISTQKLHARGPMGLTELTSTKYIIFGDGQIRN.

It belongs to the gamma-glutamyl phosphate reductase family.

Its subcellular location is the cytoplasm. It catalyses the reaction L-glutamate 5-semialdehyde + phosphate + NADP(+) = L-glutamyl 5-phosphate + NADPH + H(+). It participates in amino-acid biosynthesis; L-proline biosynthesis; L-glutamate 5-semialdehyde from L-glutamate: step 2/2. Catalyzes the NADPH-dependent reduction of L-glutamate 5-phosphate into L-glutamate 5-semialdehyde and phosphate. The product spontaneously undergoes cyclization to form 1-pyrroline-5-carboxylate. This Listeria monocytogenes serovar 1/2a (strain ATCC BAA-679 / EGD-e) protein is Gamma-glutamyl phosphate reductase.